A 519-amino-acid polypeptide reads, in one-letter code: Maturase K (519 aa).

Belongs to the intron maturase 2 family. MatK subfamily.

It is found in the plastid. It localises to the chloroplast. Its function is as follows. Usually encoded in the trnK tRNA gene intron. Probably assists in splicing its own and other chloroplast group II introns. In Dioscorea elephantipes (Elephant's foot yam), this protein is Maturase K.